The chain runs to 580 residues: Arginine--tRNA ligase (580 aa).

A 'HIGH' region motif is present at residues 123-133 (PNIAKEMHVGH).

Belongs to the class-I aminoacyl-tRNA synthetase family. Monomer.

The protein resides in the cytoplasm. The enzyme catalyses tRNA(Arg) + L-arginine + ATP = L-arginyl-tRNA(Arg) + AMP + diphosphate. This chain is Arginine--tRNA ligase (argS), found in Buchnera aphidicola subsp. Schizaphis graminum (strain Sg).